The primary structure comprises 67 residues: Large ribosomal subunit protein bL35 (67 aa).

Belongs to the bacterial ribosomal protein bL35 family.

This chain is Large ribosomal subunit protein bL35, found in Leptospira borgpetersenii serovar Hardjo-bovis (strain JB197).